We begin with the raw amino-acid sequence, 148 residues long: MAETKVILTKTVSNLGHSGDVVDVKSGYARNYLFPQGLAFAWTKGAEAQIVAMKRARLAKAVATREDAVAAKAAIEGTTVEIAAKVSESGKLFGGISNEAIAVALSDKAAVNPKAIEVETIKTTGDFPAKVALHPEITASFFVKVVAE.

The protein belongs to the bacterial ribosomal protein bL9 family.

Functionally, binds to the 23S rRNA. The protein is Large ribosomal subunit protein bL9 of Bifidobacterium longum (strain DJO10A).